The following is a 509-amino-acid chain: Ribonuclease Y (509 aa).

Residues 1–21 form a helical membrane-spanning segment; that stretch reads MIILVAVVTAVISFGLGYVVA. The region spanning 199–259 is the KH domain; the sequence is TVSTVSLPSD…IRREIARLTL (61 aa). An HD domain is found at 325-418; it reads VLDHSIEVAQ…VAAADALSAA (94 aa).

It belongs to the RNase Y family.

It localises to the cell membrane. In terms of biological role, endoribonuclease that initiates mRNA decay. This chain is Ribonuclease Y, found in Pseudothermotoga lettingae (strain ATCC BAA-301 / DSM 14385 / NBRC 107922 / TMO) (Thermotoga lettingae).